The primary structure comprises 211 residues: Pyridoxine/pyridoxamine 5'-phosphate oxidase (211 aa).

Residues 7-10 (RREY) and Lys-65 each bind substrate. FMN contacts are provided by residues 60 to 65 (RIVLLK), 75 to 76 (YT), Arg-81, Lys-82, and Gln-104. Substrate-binding residues include Tyr-122, Arg-126, and Ser-130. FMN is bound by residues 139–140 (QS) and Trp-184. A substrate-binding site is contributed by 190 to 192 (RLH). Residue Arg-194 coordinates FMN.

Belongs to the pyridoxamine 5'-phosphate oxidase family. As to quaternary structure, homodimer. FMN is required as a cofactor.

It carries out the reaction pyridoxamine 5'-phosphate + O2 + H2O = pyridoxal 5'-phosphate + H2O2 + NH4(+). It catalyses the reaction pyridoxine 5'-phosphate + O2 = pyridoxal 5'-phosphate + H2O2. It participates in cofactor metabolism; pyridoxal 5'-phosphate salvage; pyridoxal 5'-phosphate from pyridoxamine 5'-phosphate: step 1/1. It functions in the pathway cofactor metabolism; pyridoxal 5'-phosphate salvage; pyridoxal 5'-phosphate from pyridoxine 5'-phosphate: step 1/1. Catalyzes the oxidation of either pyridoxine 5'-phosphate (PNP) or pyridoxamine 5'-phosphate (PMP) into pyridoxal 5'-phosphate (PLP). The sequence is that of Pyridoxine/pyridoxamine 5'-phosphate oxidase from Vibrio atlanticus (strain LGP32) (Vibrio splendidus (strain Mel32)).